Reading from the N-terminus, the 827-residue chain is Villin-1 (827 aa).

Residues 1-126 (MTKLNAQVKG…IRKGGVASGM (126 aa)) form a necessary for homodimerization region. Positions 1 to 734 (MTKLNAQVKG…YEDLKAELGN (734 aa)) are core. A Gelsolin-like 1 repeat occupies 28-107 (QMVPVSSSTY…EVQGNESEAF (80 aa)). 2 LPA/PIP2-binding site regions span residues 112 to 119 (KQGIVIRK) and 138 to 146 (RLLHVKGKR). Gelsolin-like repeat units lie at residues 148-216 (VVAG…GEDE) and 269-342 (EVAT…SAVF). Ser366 is modified (phosphoserine). Gelsolin-like repeat units follow at residues 409 to 489 (DLVP…PHLM), 528 to 595 (TKAF…ANFW), and 634 to 707 (TEIP…PPTF). The residue at position 735 (Ser735) is a Phosphoserine. Positions 761 to 827 (SGPLPIFPLE…QNLKKEKGLF (67 aa)) constitute an HP domain. The tract at residues 816–824 (KQQNLKKEK) is LPA/PIP2-binding site 3.

This sequence belongs to the villin/gelsolin family. As to quaternary structure, monomer. Homodimer; homodimerization is necessary for actin-bundling. Associates with F-actin; phosphorylation at tyrosine residues decreases the association with F-actin. Interacts (phosphorylated at C-terminus tyrosine phosphorylation sites) with PLCG1 (via the SH2 domains). Interacts (phosphorylated form) with PLCG1; the interaction is enhanced by hepatocyte growth factor (HGF). In terms of processing, phosphorylated on tyrosine residues by SRC. The unphosphorylated form increases the initial rate of actin-nucleating activity, whereas the tyrosine-phosphorylated form inhibits actin-nucleating activity, enhances actin-bundling activity and enhances actin-severing activity by reducing high Ca(2+) requirements. The tyrosine-phosphorylated form does not regulate actin-capping activity. Tyrosine phosphorylation is essential for cell migration: tyrosine phosphorylation sites in the N-terminus half regulate actin reorganization and cell morphology, whereas tyrosine phosphorylation sites in the C-terminus half regulate cell migration. Tyrosine phosphorylation is induced by epidermal growth factor (EGF) and stimulates cell migration.

It is found in the cytoplasm. The protein resides in the cytoskeleton. It localises to the cell projection. Its subcellular location is the lamellipodium. The protein localises to the ruffle. It is found in the microvillus. The protein resides in the filopodium tip. It localises to the filopodium. Functionally, epithelial cell-specific Ca(2+)-regulated actin-modifying protein that modulates the reorganization of microvillar actin filaments. Plays a role in the actin nucleation, actin filament bundle assembly, actin filament capping and severing. Binds phosphatidylinositol 4,5-bisphosphate (PIP2) and lysophosphatidic acid (LPA); binds LPA with higher affinity than PIP2. Binding to LPA increases its phosphorylation by SRC and inhibits all actin-modifying activities. Binding to PIP2 inhibits actin-capping and -severing activities but enhances actin-bundling activity. Regulates the intestinal epithelial cell morphology, cell invasion, cell migration and apoptosis. Protects against apoptosis induced by dextran sodium sulfate (DSS) in the gastrointestinal epithelium. Appears to regulate cell death by maintaining mitochondrial integrity. Enhances hepatocyte growth factor (HGF)-induced epithelial cell motility, chemotaxis and wound repair. The protein is Villin-1 (VIL1) of Sus scrofa (Pig).